Consider the following 826-residue polypeptide: Periplasmic nitrate reductase (826 aa).

The segment at residues 1-32 (MSISRREFLKANAAVAAATAVGATLPVKIVEA) is a signal peptide (tat-type signal). The 4Fe-4S Mo/W bis-MGD-type domain occupies 39 to 95 (IKWDKAPCRFCGVGCSVLVGTDNGKVVATKGDPESPVNKGLNCIKGYFLSKIMYGKD). Positions 46, 49, 53, and 81 each coordinate [4Fe-4S] cluster. Mo-bis(molybdopterin guanine dinucleotide) contacts are provided by residues Lys-83, Gln-150, Asn-175, Cys-179, 212–219 (WGANMAEM), 262–264 (QSD), Met-372, Gln-376, Asn-482, 508–509 (SD), Lys-531, Asp-558, and 716–725 (TGRVLEHWHT). Phe-792 is a substrate binding site. Asn-800 and Lys-817 together coordinate Mo-bis(molybdopterin guanine dinucleotide).

It belongs to the prokaryotic molybdopterin-containing oxidoreductase family. NasA/NapA/NarB subfamily. Component of the periplasmic nitrate reductase NapAB complex composed of NapA and NapB. It depends on [4Fe-4S] cluster as a cofactor. The cofactor is Mo-bis(molybdopterin guanine dinucleotide). Predicted to be exported by the Tat system. The position of the signal peptide cleavage has not been experimentally proven.

It localises to the periplasm. The catalysed reaction is 2 Fe(II)-[cytochrome] + nitrate + 2 H(+) = 2 Fe(III)-[cytochrome] + nitrite + H2O. Its function is as follows. Catalytic subunit of the periplasmic nitrate reductase complex NapAB. Receives electrons from NapB and catalyzes the reduction of nitrate to nitrite. The polypeptide is Periplasmic nitrate reductase (Shewanella halifaxensis (strain HAW-EB4)).